The chain runs to 463 residues: Argininosuccinate lyase (463 aa).

It belongs to the lyase 1 family. Argininosuccinate lyase subfamily.

The protein resides in the cytoplasm. It carries out the reaction 2-(N(omega)-L-arginino)succinate = fumarate + L-arginine. It participates in amino-acid biosynthesis; L-arginine biosynthesis; L-arginine from L-ornithine and carbamoyl phosphate: step 3/3. This is Argininosuccinate lyase from Bradyrhizobium sp. (strain BTAi1 / ATCC BAA-1182).